The chain runs to 151 residues: RNA polymerase-binding transcription factor DksA (151 aa).

The Zn(2+) site is built by cysteine 114, cysteine 117, cysteine 135, and cysteine 138. Residues 114-138 form a dksA C4-type zinc finger; the sequence is CNSCAVEIGIRRLEARPTANLCIDC.

Belongs to the DksA family. As to quaternary structure, interacts directly with the RNA polymerase.

It localises to the cytoplasm. In terms of biological role, transcription factor that acts by binding directly to the RNA polymerase (RNAP). Required for negative regulation of rRNA expression and positive regulation of several amino acid biosynthesis promoters. Also required for regulation of fis expression. The polypeptide is RNA polymerase-binding transcription factor DksA (Buchnera aphidicola subsp. Schizaphis graminum (strain Sg)).